Here is a 151-residue protein sequence, read N- to C-terminus: Transcriptional regulator MraZ (151 aa).

SpoVT-AbrB domains follow at residues 7-53 (EYDC…SQTE) and 82-125 (INEV…SPDL).

The protein belongs to the MraZ family. In terms of assembly, forms oligomers.

The protein resides in the cytoplasm. It localises to the nucleoid. In Cytophaga hutchinsonii (strain ATCC 33406 / DSM 1761 / CIP 103989 / NBRC 15051 / NCIMB 9469 / D465), this protein is Transcriptional regulator MraZ.